Here is a 372-residue protein sequence, read N- to C-terminus: F-box/kelch-repeat protein At5g49000 (372 aa).

Residues 1–11 (MSSPERKRKKR) are compositionally biased toward basic residues. Residues 1–24 (MSSPERKRKKRSLEPSPESTPNPS) are disordered. Positions 19–65 (STPNPSLPDDLIVSILARVSRLYYPILSLVSKSSRTLVTSPELYKTR) constitute an F-box domain. 4 Kelch repeats span residues 131 to 177 (NIYA…VVDG), 179 to 224 (IYVA…VIEG), 226 to 271 (IYIF…LYCY), and 273 to 312 (PGGI…GGKM).

The chain is F-box/kelch-repeat protein At5g49000 from Arabidopsis thaliana (Mouse-ear cress).